Here is a 121-residue protein sequence, read N- to C-terminus: Large ribosomal subunit protein bL20 (121 aa).

Belongs to the bacterial ribosomal protein bL20 family.

Functionally, binds directly to 23S ribosomal RNA and is necessary for the in vitro assembly process of the 50S ribosomal subunit. It is not involved in the protein synthesizing functions of that subunit. The chain is Large ribosomal subunit protein bL20 from Francisella tularensis subsp. mediasiatica (strain FSC147).